Consider the following 266-residue polypeptide: Calpain small subunit 1 (266 aa).

Met1 is subject to N-acetylmethionine. At Ser6 the chain carries Phosphoserine. The 35-residue stretch at 94 to 128 (EEVRQFRRLFAQLAGDDMEVSATELMNILNKVVTR) folds into the EF-hand 1; atypical domain. The Ca(2+) site is built by Ala107, Asp110, Glu112, Glu117, Asp135, Asp150, Asp152, Thr154, Lys156, and Glu161. 4 consecutive EF-hand domains span residues 137–170 (FGLD…NNIK), 167–202 (NNIK…AGFH), 203–231 (LNEH…ISCL), and 232–266 (VRLD…TMYS). Lys177 is modified (N6-acetyllysine). Residues Asp180, Asp182, Ser184, Thr186, Glu191, and Asp223 each contribute to the Ca(2+) site.

In terms of assembly, homodimer or heterodimer of a large (catalytic) and a small (regulatory) subunit. In presence of calcium, the heterodimer dissociates. The N-terminus is blocked.

The protein localises to the cytoplasm. It localises to the cell membrane. Functionally, regulatory subunit of the calcium-regulated non-lysosomal thiol-protease which catalyzes limited proteolysis of substrates involved in cytoskeletal remodeling and signal transduction. Essential for embryonic development. This is Calpain small subunit 1 (CAPNS1) from Oryctolagus cuniculus (Rabbit).